The primary structure comprises 310 residues: ADP-L-glycero-D-manno-heptose-6-epimerase (310 aa).

NADP(+)-binding positions include 10–11 (FI), 31–32 (DN), Lys-38, Lys-53, 75–79 (EGACS), and Asn-92. Tyr-140 serves as the catalytic Proton acceptor. Lys-144 lines the NADP(+) pocket. Substrate is bound at residue Asn-169. Residues Val-170 and Lys-178 each coordinate NADP(+). The active-site Proton acceptor is the Lys-178. Substrate contacts are provided by residues Ser-180, His-187, 201–204 (FSGS), Arg-209, and Tyr-272.

This sequence belongs to the NAD(P)-dependent epimerase/dehydratase family. HldD subfamily. In terms of assembly, homopentamer. Requires NADP(+) as cofactor.

The enzyme catalyses ADP-D-glycero-beta-D-manno-heptose = ADP-L-glycero-beta-D-manno-heptose. It functions in the pathway nucleotide-sugar biosynthesis; ADP-L-glycero-beta-D-manno-heptose biosynthesis; ADP-L-glycero-beta-D-manno-heptose from D-glycero-beta-D-manno-heptose 7-phosphate: step 4/4. Its function is as follows. Catalyzes the interconversion between ADP-D-glycero-beta-D-manno-heptose and ADP-L-glycero-beta-D-manno-heptose via an epimerization at carbon 6 of the heptose. This Pectobacterium carotovorum subsp. carotovorum (strain PC1) protein is ADP-L-glycero-D-manno-heptose-6-epimerase.